We begin with the raw amino-acid sequence, 432 residues long: Adenylosuccinate synthetase (432 aa).

GTP is bound by residues glycine 12–lysine 18 and glycine 40–threonine 42. The active-site Proton acceptor is aspartate 13. 2 residues coordinate Mg(2+): aspartate 13 and glycine 40. IMP is bound by residues aspartate 13 to lysine 16, asparagine 38 to histidine 41, threonine 129, arginine 143, glutamine 224, threonine 239, and arginine 303. Histidine 41 acts as the Proton donor in catalysis. Valine 299 to arginine 305 is a binding site for substrate. GTP contacts are provided by residues arginine 305, lysine 331–aspartate 333, and glycine 413–glycine 415.

This sequence belongs to the adenylosuccinate synthetase family. As to quaternary structure, homodimer. The cofactor is Mg(2+).

It is found in the cytoplasm. It carries out the reaction IMP + L-aspartate + GTP = N(6)-(1,2-dicarboxyethyl)-AMP + GDP + phosphate + 2 H(+). The protein operates within purine metabolism; AMP biosynthesis via de novo pathway; AMP from IMP: step 1/2. In terms of biological role, plays an important role in the de novo pathway of purine nucleotide biosynthesis. Catalyzes the first committed step in the biosynthesis of AMP from IMP. The chain is Adenylosuccinate synthetase from Mycobacterium leprae (strain TN).